Reading from the N-terminus, the 385-residue chain is A-type ATP synthase subunit C (385 aa).

It belongs to the V-ATPase V0D/AC39 subunit family. Has multiple subunits with at least A(3), B(3), C, D, E, F, H, I and proteolipid K(x).

The protein localises to the cell membrane. Component of the A-type ATP synthase that produces ATP from ADP in the presence of a proton gradient across the membrane. The protein is A-type ATP synthase subunit C of Methanothermobacter thermautotrophicus (strain ATCC 29096 / DSM 1053 / JCM 10044 / NBRC 100330 / Delta H) (Methanobacterium thermoautotrophicum).